The following is a 500-amino-acid chain: MFDRPLKILFVSSEVVPFAKTGGLADVAGSLPKALATVVDHGLSHHDVRVAMPRYKMIEDARYVTDFPVWFADKNHEAIIRQREIEAQFQGARHTVPVYMIDNYQYYYRDGIYVFDDEAERFGFFCKAVLEMLPRLGWQPDVIHCNDWQCGPIPLFLKTHYRGDPFFSRMATVFTIHNLQYQGNFPKEVLHMLGLGKEYFRPEALEFYGSVSFMKAGIQYADVLTTVSRTYAREIQTPEYGQRMEGVLRQRAHELYGIVNGINYHEFDPKTDPRLHRNYDVDHWEHKKENKFTLQREMNLPVRDVPVLGLITRLVDQKGLDLIAEIIDELMRLDIQMVILGKGDKYYEDMFREMKVQHPGKIAAHIGFNVVLAQRIYAGSDMFLMPSRFEPCGLGQLISLRYGTIPIVRETGGLADTVNEYDLATGGGNGFVFKEYDARALYSAIARALKLYREDQEAWGRLVRNAMEMDFSWARSAVEYLQVYRDAMEKVSEERGIRIA.

Lys-20 provides a ligand contact to ADP-alpha-D-glucose.

The protein belongs to the glycosyltransferase 1 family. Bacterial/plant glycogen synthase subfamily.

It catalyses the reaction [(1-&gt;4)-alpha-D-glucosyl](n) + ADP-alpha-D-glucose = [(1-&gt;4)-alpha-D-glucosyl](n+1) + ADP + H(+). It participates in glycan biosynthesis; glycogen biosynthesis. Its function is as follows. Synthesizes alpha-1,4-glucan chains using ADP-glucose. In Desulforudis audaxviator (strain MP104C), this protein is Glycogen synthase.